The following is a 546-amino-acid chain: Light-independent protochlorophyllide reductase subunit B (546 aa).

A [4Fe-4S] cluster-binding site is contributed by D36. D287 acts as the Proton donor in catalysis. Position 422–423 (422–423) interacts with substrate; the sequence is GL. Positions 443-501 are disordered; it reads PSHLSAHRPTGEAVGDAVGEPPAAPRDQAAPAATLDGSAAQSDPARTTPPGAPSWEDSA.

Belongs to the ChlB/BchB/BchZ family. In terms of assembly, protochlorophyllide reductase is composed of three subunits; BchL, BchN and BchB. Forms a heterotetramer of two BchB and two BchN subunits. [4Fe-4S] cluster is required as a cofactor.

It catalyses the reaction chlorophyllide a + oxidized 2[4Fe-4S]-[ferredoxin] + 2 ADP + 2 phosphate = protochlorophyllide a + reduced 2[4Fe-4S]-[ferredoxin] + 2 ATP + 2 H2O. Its pathway is porphyrin-containing compound metabolism; bacteriochlorophyll biosynthesis (light-independent). Its function is as follows. Component of the dark-operative protochlorophyllide reductase (DPOR) that uses Mg-ATP and reduced ferredoxin to reduce ring D of protochlorophyllide (Pchlide) to form chlorophyllide a (Chlide). This reaction is light-independent. The NB-protein (BchN-BchB) is the catalytic component of the complex. The protein is Light-independent protochlorophyllide reductase subunit B of Rhodospirillum rubrum (strain ATCC 11170 / ATH 1.1.1 / DSM 467 / LMG 4362 / NCIMB 8255 / S1).